The chain runs to 753 residues: Centromere protein I (753 aa).

A compositionally biased stretch (basic residues) spans 1–15 (MQRRQSSKHSKRPLQ). Positions 1–54 (MQRRQSSKHSKRPLQVHHSNQTDLSAWRKGGTVDTEKSAQNRQSLSDQKNDNEQ) are disordered.

The protein belongs to the CENP-I/CTF3 family. As to quaternary structure, component of the CENPA-HI complex, at least composed of CENPH, CENPI, CENPK, CENPL, CENPM, CENPO and CENPP.

It is found in the nucleus. Its subcellular location is the chromosome. It localises to the centromere. In terms of biological role, component of the CENPA-HI complex, a centromeric complex involved in assembly of kinetochore proteins, mitotic progression and chromosome segregation. Required for the localization of CENPC but not CENPA to the centromere. It however may be involved in incorporation of newly synthesized CENPA into centromeres via its interaction with the CENPA-NAC complex. The polypeptide is Centromere protein I (CENPI) (Gallus gallus (Chicken)).